We begin with the raw amino-acid sequence, 502 residues long: Activin receptor type-1-like (502 aa).

The signal sequence occupies residues 1–22 (MTLGSFRRGLLMLSVAFGLTRG). At 23 to 119 (DLAKPSKLVN…EEPEVDAHLP (97 aa)) the chain is on the extracellular side. Asn-32 carries N-linked (GlcNAc...) asparagine glycosylation. Disulfide bonds link Cys-33–Cys-50, Cys-35–Cys-40, and Cys-45–Cys-68. The mediates specificity for BMP ligand stretch occupies residues 72 to 75 (NQEL). Cystine bridges form between Cys-76–Cys-88 and Cys-89–Cys-94. N-linked (GlcNAc...) asparagine glycosylation occurs at Asn-97. The chain crosses the membrane as a helical span at residues 120-140 (LILGPVLALPVLVALGALGLW). Residues 141-502 (RVRRRQEKQR…HNPEKPKVIH (362 aa)) are Cytoplasmic-facing. Residues Ser-154, Ser-159, and Ser-160 each carry the phosphoserine modification. The 30-residue stretch at 171–200 (SMLGDFLDSDCTTGSGSGLPFLVQRTVARQ) folds into the GS domain. Residues 201–502 (VALVECVGKG…HNPEKPKVIH (302 aa)) form the Protein kinase domain. ATP contacts are provided by residues 207–215 (VGKGRYGEV) and Lys-228. Residue Asp-329 is the Proton acceptor of the active site.

Belongs to the protein kinase superfamily. TKL Ser/Thr protein kinase family. TGFB receptor subfamily. As to quaternary structure, interacts with TSC22D1/TSC-22. It depends on Mg(2+) as a cofactor. Mn(2+) serves as cofactor.

Its subcellular location is the cell membrane. The enzyme catalyses L-threonyl-[receptor-protein] + ATP = O-phospho-L-threonyl-[receptor-protein] + ADP + H(+). The catalysed reaction is L-seryl-[receptor-protein] + ATP = O-phospho-L-seryl-[receptor-protein] + ADP + H(+). In terms of biological role, type I receptor for TGF-beta family ligands BMP9/GDF2 and BMP10 and important regulator of normal blood vessel development. On ligand binding, forms a receptor complex consisting of two type II and two type I transmembrane serine/threonine kinases. Type II receptors phosphorylate and activate type I receptors which autophosphorylate, then bind and activate SMAD transcriptional regulators. May bind activin as well. This chain is Activin receptor type-1-like (Acvrl1), found in Mus musculus (Mouse).